A 94-amino-acid polypeptide reads, in one-letter code: MSFKGNPKVQKVMVQPINLIFRYLQNRSRVQVWLYENISLRIEGHIVGFDEYMNLVLDDAEEVYVKTRQRRNLGRIMLKGDNITLIQNVSPTKD.

The Sm domain maps to 17–92; it reads INLIFRYLQN…ITLIQNVSPT (76 aa).

It belongs to the snRNP Sm proteins family. In terms of assembly, core component of the spliceosomal U1, U2, U4 and U5 small nuclear ribonucleoproteins (snRNPs), the building blocks of the spliceosome. Interacts with the SMN complex.

The protein resides in the nucleus. The protein localises to the cytoplasm. It localises to the cytosol. In terms of biological role, plays a role in pre-mRNA splicing as a core component of the spliceosomal U1, U2, U4 and U5 small nuclear ribonucleoproteins (snRNPs), the building blocks of the spliceosome. This Drosophila melanogaster (Fruit fly) protein is Probable small nuclear ribonucleoprotein E (SmE).